Here is a 100-residue protein sequence, read N- to C-terminus: Large ribosomal subunit protein uL23 (100 aa).

This sequence belongs to the universal ribosomal protein uL23 family. In terms of assembly, part of the 50S ribosomal subunit. Contacts protein L29, and trigger factor when it is bound to the ribosome.

Functionally, one of the early assembly proteins it binds 23S rRNA. One of the proteins that surrounds the polypeptide exit tunnel on the outside of the ribosome. Forms the main docking site for trigger factor binding to the ribosome. The chain is Large ribosomal subunit protein uL23 from Thermosynechococcus vestitus (strain NIES-2133 / IAM M-273 / BP-1).